The following is a 411-amino-acid chain: NADH-quinone oxidoreductase subunit D 2 (411 aa).

Belongs to the complex I 49 kDa subunit family. NDH-1 is composed of 14 different subunits. Subunits NuoB, C, D, E, F, and G constitute the peripheral sector of the complex.

It is found in the cell membrane. The enzyme catalyses a quinone + NADH + 5 H(+)(in) = a quinol + NAD(+) + 4 H(+)(out). Functionally, NDH-1 shuttles electrons from NADH, via FMN and iron-sulfur (Fe-S) centers, to quinones in the respiratory chain. The immediate electron acceptor for the enzyme in this species is believed to be ubiquinone. Couples the redox reaction to proton translocation (for every two electrons transferred, four hydrogen ions are translocated across the cytoplasmic membrane), and thus conserves the redox energy in a proton gradient. This Chloroflexus aurantiacus (strain ATCC 29366 / DSM 635 / J-10-fl) protein is NADH-quinone oxidoreductase subunit D 2.